A 254-amino-acid chain; its full sequence is Protein CbbY, plasmid (254 aa).

It belongs to the HAD-like hydrolase superfamily. CbbY/CbbZ/Gph/YieH family.

The protein is Protein CbbY, plasmid (cbbYP) of Cupriavidus necator (strain ATCC 17699 / DSM 428 / KCTC 22496 / NCIMB 10442 / H16 / Stanier 337) (Ralstonia eutropha).